The following is a 404-amino-acid chain: Cysteine desulfurase IscS (404 aa).

Residues 75 to 76 (AT), N155, Q183, and 203 to 205 (SGH) each bind pyridoxal 5'-phosphate. An N6-(pyridoxal phosphate)lysine modification is found at K206. Pyridoxal 5'-phosphate is bound at residue T243. The active-site Cysteine persulfide intermediate is C328. C328 contacts [2Fe-2S] cluster.

Belongs to the class-V pyridoxal-phosphate-dependent aminotransferase family. NifS/IscS subfamily. Homodimer. Forms a heterotetramer with IscU, interacts with other sulfur acceptors. Requires pyridoxal 5'-phosphate as cofactor.

It is found in the cytoplasm. The catalysed reaction is (sulfur carrier)-H + L-cysteine = (sulfur carrier)-SH + L-alanine. It participates in cofactor biosynthesis; iron-sulfur cluster biosynthesis. In terms of biological role, master enzyme that delivers sulfur to a number of partners involved in Fe-S cluster assembly, tRNA modification or cofactor biosynthesis. Catalyzes the removal of elemental sulfur atoms from cysteine to produce alanine. Functions as a sulfur delivery protein for Fe-S cluster synthesis onto IscU, an Fe-S scaffold assembly protein, as well as other S acceptor proteins. The polypeptide is Cysteine desulfurase IscS (Shewanella sp. (strain MR-4)).